Here is an 83-residue protein sequence, read N- to C-terminus: Small ribosomal subunit protein uS17 (83 aa).

Belongs to the universal ribosomal protein uS17 family. Part of the 30S ribosomal subunit.

One of the primary rRNA binding proteins, it binds specifically to the 5'-end of 16S ribosomal RNA. The chain is Small ribosomal subunit protein uS17 from Acaryochloris marina (strain MBIC 11017).